The following is a 181-amino-acid chain: Negative modulator of initiation of replication (181 aa).

Interaction with DNA stretches follow at residues 87-88 (AV), 116-120 (RTRVY), and 150-156 (NTNTGRK).

It belongs to the SeqA family. As to quaternary structure, homodimer. Polymerizes to form helical filaments.

It is found in the cytoplasm. In terms of biological role, negative regulator of replication initiation, which contributes to regulation of DNA replication and ensures that replication initiation occurs exactly once per chromosome per cell cycle. Binds to pairs of hemimethylated GATC sequences in the oriC region, thus preventing assembly of replication proteins and re-initiation at newly replicated origins. Repression is relieved when the region becomes fully methylated. The polypeptide is Negative modulator of initiation of replication (Shigella flexneri).